The sequence spans 236 residues: Baculoviral IAP repeat-containing protein 8 (236 aa).

One copy of the BIR repeat lies at 7–70; the sequence is RLITFGTWMY…KWYPGCKYLL (64 aa). Residues C39, C42, H59, and C66 each contribute to the Zn(2+) site. The segment at 189 to 224 adopts an RING-type zinc-finger fold; sequence CKICMDRHIAVVFIPCGHLVTCKQCAEAVDRCPMCS.

The protein belongs to the IAP family. Binds to caspase-9. Testis specific in normal tissues.

Its subcellular location is the cytoplasm. In terms of biological role, protects against apoptosis mediated by BAX. The protein is Baculoviral IAP repeat-containing protein 8 (BIRC8) of Homo sapiens (Human).